We begin with the raw amino-acid sequence, 89 residues long: Small ribosomal subunit protein uS17 (89 aa).

The protein belongs to the universal ribosomal protein uS17 family. Part of the 30S ribosomal subunit.

In terms of biological role, one of the primary rRNA binding proteins, it binds specifically to the 5'-end of 16S ribosomal RNA. The chain is Small ribosomal subunit protein uS17 from Leptospira borgpetersenii serovar Hardjo-bovis (strain JB197).